The chain runs to 65 residues: Large ribosomal subunit protein bL35 (65 aa).

The interval 1-28 (MPKLKTRKAAARRFKATGSGKIKRRKAF) is disordered.

The protein belongs to the bacterial ribosomal protein bL35 family.

This is Large ribosomal subunit protein bL35 from Trichodesmium erythraeum (strain IMS101).